The following is a 589-amino-acid chain: Sentrin-specific protease 2 (589 aa).

The Nuclear localization signal motif lies at 28 to 31; sequence KRRR. Phosphoserine is present on serine 32. The Nuclear localization signal signature appears at 46-51; the sequence is PAKRPR. The interval 71-382 is axin-binding; that stretch reads GFPFQLTTKP…EKEISNALGH (312 aa). Disordered regions lie at residues 148 to 179 and 191 to 210; these read SFGF…LMWK and EESG…GVQK. Positions 317–332 match the Nuclear export signal motif; sequence LEPDLSEEVSARLRLG. A phosphoserine mark is found at serine 333 and serine 344. Residues 395–559 form a protease region; it reads LRITRGDIQT…MFTCKYADYI (165 aa). Residues histidine 478 and aspartate 495 contribute to the active site. The active-site Nucleophile is cysteine 548.

The protein belongs to the peptidase C48 family. In terms of assembly, binds to SUMO2 and SUMO3. Interacts with the C-terminal domain of NUP153 via its N-terminus. Interacts with MTA1. In terms of processing, polyubiquitinated; which leads to proteasomal degradation.

It localises to the nucleus. The protein localises to the nuclear pore complex. Its subcellular location is the nucleus membrane. It is found in the cytoplasm. Its function is as follows. Protease that catalyzes two essential functions in the SUMO pathway. The first is the hydrolysis of an alpha-linked peptide bond at the C-terminal end of the small ubiquitin-like modifier (SUMO) propeptides, SUMO1, SUMO2 and SUMO3 leading to the mature form of the proteins. The second is the deconjugation of SUMO1, SUMO2 and SUMO3 from targeted proteins, by cleaving an epsilon-linked peptide bond between the C-terminal glycine of the mature SUMO and the lysine epsilon-amino group of the target protein. May down-regulate CTNNB1 levels and thereby modulate the Wnt pathway. Deconjugates SUMO2 from MTA1. Plays a dynamic role in adipogenesis by desumoylating and promoting the stabilization of CEBPB. Acts as a regulator of the cGAS-STING pathway by catalyzing desumoylation of CGAS and STING1 during the late phase of viral infection. The protein is Sentrin-specific protease 2 (SENP2) of Pongo abelii (Sumatran orangutan).